The chain runs to 194 residues: PBAN-type neuropeptides (194 aa).

Residues 1–23 form the signal peptide; sequence MFNQTQLFVFLAVFTTSSVLGNN. Leu-47 carries the leucine amide modification. Positions 51–94 are excised as a propeptide; that stretch reads SLRISTEDNRQAFFKLLEAADALKYYYDQLPYEMQADEPETRVT. A leucine amide mark is found at Leu-103, Leu-123, Leu-159, and Leu-169. The propeptide occupies 172-194; the sequence is ELSYDMMPNKIRVVRSTNKTRST.

Belongs to the pyrokinin family. As to expression, expressed in the subesophageal ganglions. Not found in corpora cardiaca, corpora allata and thoracic ganglia.

The protein resides in the secreted. Its function is as follows. A hormone that controls sex pheromone production in females and pheromone responsiveness in male. Also mediates visceral muscle contractile activity (myotropic activity). The polypeptide is PBAN-type neuropeptides (Helicoverpa zea (Corn earworm moth)).